Reading from the N-terminus, the 277-residue chain is Caspase-3 (277 aa).

An N-acetylmethionine modification is found at methionine 1. 2 propeptides span residues methionine 1–aspartate 9 and serine 10–aspartate 28. A compositionally biased stretch (polar residues) spans methionine 1–serine 10. Positions methionine 1–isoleucine 20 are disordered. Position 11 is an N6-acetyllysine (lysine 11). A compositionally biased stretch (basic and acidic residues) spans lysine 11–isoleucine 20. Residue serine 26 is modified to Phosphoserine. Catalysis depends on residues histidine 121 and cysteine 163. Residue cysteine 163 is modified to S-nitrosocysteine; in inhibited form.

Belongs to the peptidase C14A family. Heterotetramer that consists of two anti-parallel arranged heterodimers, each one formed by a 17 kDa (p17) and a 12 kDa (p12) subunit. Interacts with BIRC6/bruce. Cleavage by granzyme B, caspase-6, caspase-8 and caspase-10 generates the two active subunits. Additional processing of the propeptides is likely due to the autocatalytic activity of the activated protease. Active heterodimers between the small subunit of caspase-7 protease and the large subunit of caspase-3 also occur and vice versa. In terms of processing, S-nitrosylated on its catalytic site cysteine in unstimulated cell lines and denitrosylated upon activation of the Fas apoptotic pathway, associated with an increase in intracellular caspase activity. Fas therefore activates caspase-3 not only by inducing the cleavage of the caspase zymogen to its active subunits, but also by stimulating the denitrosylation of its active site thiol. Post-translationally, ubiquitinated by BIRC6; this activity is inhibited by DIABLO/SMAC.

It is found in the cytoplasm. The catalysed reaction is Strict requirement for an Asp residue at positions P1 and P4. It has a preferred cleavage sequence of Asp-Xaa-Xaa-Asp-|- with a hydrophobic amino-acid residue at P2 and a hydrophilic amino-acid residue at P3, although Val or Ala are also accepted at this position.. Inhibited by BIRC6; following inhibition of BIRC6-caspase binding by DIABLO/SMAC, BIRC6 is subjected to caspase cleavage, leading to an increase in active caspases. Functionally, involved in the activation cascade of caspases responsible for apoptosis execution. At the onset of apoptosis, it proteolytically cleaves poly(ADP-ribose) polymerase PARP1 at a '216-Asp-|-Gly-217' bond. Cleaves and activates sterol regulatory element binding proteins (SREBPs) between the basic helix-loop-helix leucine zipper domain and the membrane attachment domain. Cleaves and activates caspase-6, -7 and -9 (CASP6, CASP7 and CASP9, respectively). Cleaves and inactivates interleukin-18 (IL18). Triggers cell adhesion in sympathetic neurons through RET cleavage. Cleaves IL-1 beta between an Asp and an Ala, releasing the mature cytokine which is involved in a variety of inflammatory processes. Cleaves and inhibits serine/threonine-protein kinase AKT1 in response to oxidative stress. Acts as an inhibitor of type I interferon production during virus-induced apoptosis by mediating cleavage of antiviral proteins CGAS, IRF3 and MAVS, thereby preventing cytokine overproduction. Also involved in pyroptosis by mediating cleavage and activation of gasdermin-E (GSDME). Cleaves XRCC4 and phospholipid scramblase proteins XKR4, XKR8 and XKR9, leading to promote phosphatidylserine exposure on apoptotic cell surface. Cleaves BIRC6 following inhibition of BIRC6-caspase binding by DIABLO/SMAC. In Pan troglodytes (Chimpanzee), this protein is Caspase-3 (CASP3).